The following is a 415-amino-acid chain: Histidine--tRNA ligase (415 aa).

Belongs to the class-II aminoacyl-tRNA synthetase family. In terms of assembly, homodimer.

The protein resides in the cytoplasm. The enzyme catalyses tRNA(His) + L-histidine + ATP = L-histidyl-tRNA(His) + AMP + diphosphate + H(+). This is Histidine--tRNA ligase from Idiomarina loihiensis (strain ATCC BAA-735 / DSM 15497 / L2-TR).